Consider the following 302-residue polypeptide: Sulfate adenylyltransferase subunit 2 (302 aa).

The interval 280-302 (RQGRAIDHDQSGSMELKKRQGYF) is disordered.

This sequence belongs to the PAPS reductase family. CysD subfamily. As to quaternary structure, heterodimer composed of CysD, the smaller subunit, and CysN.

The catalysed reaction is sulfate + ATP + H(+) = adenosine 5'-phosphosulfate + diphosphate. It functions in the pathway sulfur metabolism; hydrogen sulfide biosynthesis; sulfite from sulfate: step 1/3. Its function is as follows. With CysN forms the ATP sulfurylase (ATPS) that catalyzes the adenylation of sulfate producing adenosine 5'-phosphosulfate (APS) and diphosphate, the first enzymatic step in sulfur assimilation pathway. APS synthesis involves the formation of a high-energy phosphoric-sulfuric acid anhydride bond driven by GTP hydrolysis by CysN coupled to ATP hydrolysis by CysD. This chain is Sulfate adenylyltransferase subunit 2, found in Vibrio cholerae serotype O1 (strain ATCC 39315 / El Tor Inaba N16961).